Here is a 220-residue protein sequence, read N- to C-terminus: Iron-sulfur cluster repair protein YtfE (220 aa).

This sequence belongs to the RIC family. YtfE subfamily. Homodimer.

Its subcellular location is the cytoplasm. In terms of biological role, di-iron-containing protein involved in the repair of iron-sulfur clusters damaged by oxidative and nitrosative stress conditions. This chain is Iron-sulfur cluster repair protein YtfE, found in Shigella boydii serotype 18 (strain CDC 3083-94 / BS512).